A 349-amino-acid chain; its full sequence is UDP-N-acetylenolpyruvoylglucosamine reductase (349 aa).

One can recognise an FAD-binding PCMH-type domain in the interval 25–197 (GIDARARYAA…VSVTFRLPKR (173 aa)). Residue Arg-173 is part of the active site. Residue Ser-249 is the Proton donor of the active site. Glu-345 is a catalytic residue.

The protein belongs to the MurB family. Requires FAD as cofactor.

The protein resides in the cytoplasm. The enzyme catalyses UDP-N-acetyl-alpha-D-muramate + NADP(+) = UDP-N-acetyl-3-O-(1-carboxyvinyl)-alpha-D-glucosamine + NADPH + H(+). The protein operates within cell wall biogenesis; peptidoglycan biosynthesis. Its function is as follows. Cell wall formation. The sequence is that of UDP-N-acetylenolpyruvoylglucosamine reductase from Burkholderia multivorans (strain ATCC 17616 / 249).